We begin with the raw amino-acid sequence, 61 residues long: Bactericidin B-5P (61 aa).

An N-terminal signal peptide occupies residues 1-22; that stretch reads MNFSRVLFFVFACLSAFAMASA. The propeptide at 23–24 is removed by a dipeptidylpeptidase; it reads AP. Gly60 bears the Glycine amide mark.

Belongs to the cecropin family.

It is found in the secreted. Its function is as follows. Cecropins have lytic and antibacterial activity against several Gram-positive and Gram-negative bacteria. The sequence is that of Bactericidin B-5P from Manduca sexta (Tobacco hawkmoth).